The chain runs to 892 residues: LEAF RUST 10 DISEASE-RESISTANCE LOCUS RECEPTOR-LIKE PROTEIN KINASE-like 2.8 (892 aa).

The first 27 residues, 1–27 (MYYHSLSSYSILFFLFSLFHHLPCASS), serve as a signal peptide directing secretion. The Extracellular portion of the chain corresponds to 28–496 (NQGLGWCESL…RFIATLVRYT (469 aa)). 12 N-linked (GlcNAc...) asparagine glycosylation sites follow: asparagine 42, asparagine 71, asparagine 88, asparagine 112, asparagine 186, asparagine 222, asparagine 230, asparagine 286, asparagine 358, asparagine 384, asparagine 407, and asparagine 458. A helical membrane pass occupies residues 497 to 517 (FIALGALTGVVIVFLVLLCPC). Topologically, residues 518 to 892 (FRVQIFRKRK…TNSKLESSSL (375 aa)) are cytoplasmic. Threonine 547 is subject to Phosphothreonine. One can recognise a Protein kinase domain in the interval 556-854 (KSFTEVVGRG…ALEVPPRPVL (299 aa)). ATP is bound by residues 562–570 (VGRGGFGIV) and lysine 584. Tyrosine 629 is subject to Phosphotyrosine. The Proton acceptor role is filled by aspartate 680. Phosphothreonine occurs at positions 717 and 720.

It belongs to the protein kinase superfamily. Ser/Thr protein kinase family.

The protein localises to the membrane. It catalyses the reaction L-seryl-[protein] + ATP = O-phospho-L-seryl-[protein] + ADP + H(+). The enzyme catalyses L-threonyl-[protein] + ATP = O-phospho-L-threonyl-[protein] + ADP + H(+). This Arabidopsis thaliana (Mouse-ear cress) protein is LEAF RUST 10 DISEASE-RESISTANCE LOCUS RECEPTOR-LIKE PROTEIN KINASE-like 2.8.